Here is a 230-residue protein sequence, read N- to C-terminus: 3-dehydroquinate dehydratase (230 aa).

Residues serine 26, 51-53 (EIR), and arginine 84 each bind 3-dehydroquinate. Histidine 127 (proton donor/acceptor) is an active-site residue. The active-site Schiff-base intermediate with substrate is lysine 150. The 3-dehydroquinate site is built by arginine 190, threonine 209, and glutamine 213.

This sequence belongs to the type-I 3-dehydroquinase family. In terms of assembly, homodimer.

The catalysed reaction is 3-dehydroquinate = 3-dehydroshikimate + H2O. It functions in the pathway metabolic intermediate biosynthesis; chorismate biosynthesis; chorismate from D-erythrose 4-phosphate and phosphoenolpyruvate: step 3/7. Functionally, involved in the third step of the chorismate pathway, which leads to the biosynthesis of aromatic amino acids. Catalyzes the cis-dehydration of 3-dehydroquinate (DHQ) and introduces the first double bond of the aromatic ring to yield 3-dehydroshikimate. The chain is 3-dehydroquinate dehydratase from Thermoplasma volcanium (strain ATCC 51530 / DSM 4299 / JCM 9571 / NBRC 15438 / GSS1).